The following is an 815-amino-acid chain: Lon protease 1 (815 aa).

The 198-residue stretch at 14–211 folds into the Lon N-terminal domain; the sequence is IAILPLLGTV…KLNEVLTREL (198 aa). 370–377 lines the ATP pocket; the sequence is GPPGVGKT. Residues 606 to 787 form the Lon proteolytic domain; it reads TDRPGIVTGL…GQVIELALRA (182 aa). Residues serine 693 and lysine 736 contribute to the active site.

The protein belongs to the peptidase S16 family. Homohexamer. Organized in a ring with a central cavity.

It is found in the cytoplasm. It catalyses the reaction Hydrolysis of proteins in presence of ATP.. ATP-dependent serine protease that mediates the selective degradation of mutant and abnormal proteins as well as certain short-lived regulatory proteins. Required for cellular homeostasis and for survival from DNA damage and developmental changes induced by stress. Degrades polypeptides processively to yield small peptide fragments that are 5 to 10 amino acids long. Binds to DNA in a double-stranded, site-specific manner. This is Lon protease 1 from Herpetosiphon aurantiacus (strain ATCC 23779 / DSM 785 / 114-95).